The following is a 283-amino-acid chain: Myeloid differentiation primary response protein MyD88-B (283 aa).

The Death domain occupies 27–105 (RLCLYLNPNA…DILTDLAPLI (79 aa)). Residues 106 to 143 (EADCKKYLEKKHGPLPLQDDNVDSSEQYRITKSDDPYG) form an intermediate domain region. Positions 147–281 (ETFDAFICCC…WFWDKLAKAL (135 aa)) constitute a TIR domain.

It is found in the cytoplasm. In terms of biological role, adapter protein involved in the Toll-like receptor and IL-1 receptor signaling pathway in the innate immune response. Activates expression of target genes in the Spemann organizer region during early embryonic development. Is required for normal axis formation. The protein is Myeloid differentiation primary response protein MyD88-B (myd88-b) of Xenopus laevis (African clawed frog).